The following is a 393-amino-acid chain: Acetate kinase (393 aa).

Asparagine 8 contributes to the Mg(2+) binding site. ATP is bound at residue lysine 15. Arginine 91 is a binding site for substrate. Aspartate 148 serves as the catalytic Proton donor/acceptor. Residues 206–210 (HLGSG), 280–282 (DMR), and 325–329 (GVGEN) contribute to the ATP site. Residue glutamate 376 participates in Mg(2+) binding.

Belongs to the acetokinase family. Homodimer. It depends on Mg(2+) as a cofactor. Mn(2+) serves as cofactor.

Its subcellular location is the cytoplasm. It catalyses the reaction acetate + ATP = acetyl phosphate + ADP. It functions in the pathway metabolic intermediate biosynthesis; acetyl-CoA biosynthesis; acetyl-CoA from acetate: step 1/2. Catalyzes the formation of acetyl phosphate from acetate and ATP. Can also catalyze the reverse reaction. This Rhizobium meliloti (Ensifer meliloti) protein is Acetate kinase.